The sequence spans 344 residues: Thioredoxin reductase FGSG_00043 (344 aa).

FAD is bound by residues 12-15, 34-39, His-51, and Ala-121; these read GGPA and DSVSYR. Cysteines 165 and 168 form a disulfide. Residues Asp-314 and 321-322 contribute to the FAD site; that span reads FV.

The protein belongs to the class-II pyridine nucleotide-disulfide oxidoreductase family. In terms of assembly, homodimer. FAD serves as cofactor.

Its pathway is mycotoxin biosynthesis. Its function is as follows. Thioredoxin reductase; part of the gene cluster that mediates the biosynthesis of gramillins A and B, bicyclic lipopeptides that induce cell death in maize leaves but not in wheat leaves. The nonribosomal peptide synthetase GRA1 incorporates respectively a glutamic adic (Glu), a leucine (Leu), a serine (Ser), a hydroxyglutamine (HOGln), a 2-amino decanoic acid, and 2 cysteins (CysB and CysA). The biosynthesis of 2-amino decanoic acid incorporated in gramillins could be initiated by a fatty acid synthase composed of the alpha and beta subunits FGSG_00036 and FGSG_11656. The cytochrome P450 monooxygenase FGSG_15680 could hydroxylate the fatty acid chain. Subsequent oxidation to the ketone by the oxidoreductase FGSG_00048 and transamination by aminotransferase FGSG_00049 could form 2-amino-decanoic acid. On the other hand, FGSG_15680 could also be responsible for the HO-modified glutamine at the gamma-position. Whether hydroxylation occurs on the fully assembled product or on the Gln residue prior to assembly into the gramillins requires further proof. The thioredoxin FGSG_00043 could also be required for the disulfide-bond formation between CysA and CysB. The specific involvement of the remaining proteins from the cluster is more difficult to discern, but could have broader regulatory (FGSG_00040 and FGSG_11657) or enzymatic functions (FGSG_00044 and FGSG_00045). The final C-domain of GRA1 does not possess the expected sequence of a termination CT domain, often implicated in macrocyclization and release of a cyclopeptidein fungal NRPs; and the thioesterase FGSG_00047 may act in concert with the terminal C-domain of GRA1 to catalyze the formation of the macrocyclic anhydride and release of the products. This Gibberella zeae (strain ATCC MYA-4620 / CBS 123657 / FGSC 9075 / NRRL 31084 / PH-1) (Wheat head blight fungus) protein is Thioredoxin reductase FGSG_00043.